A 75-amino-acid chain; its full sequence is RNA-binding protein KhpA (75 aa).

In terms of domain architecture, KH spans 29–75; that stretch reads SIILELKVSPEDMGKVIGKQGRIAKAIRTVVKAAAIKENKKVVVEII.

The protein belongs to the KhpA RNA-binding protein family. In terms of assembly, forms a complex with KhpB.

The protein localises to the cytoplasm. Functionally, a probable RNA chaperone. Forms a complex with KhpB which binds to cellular RNA and controls its expression. Plays a role in peptidoglycan (PG) homeostasis and cell length regulation. The protein is RNA-binding protein KhpA of Clostridium perfringens (strain 13 / Type A).